Here is a 180-residue protein sequence, read N- to C-terminus: Adenine phosphoribosyltransferase (180 aa).

Belongs to the purine/pyrimidine phosphoribosyltransferase family. As to quaternary structure, homodimer.

The protein resides in the cytoplasm. The enzyme catalyses AMP + diphosphate = 5-phospho-alpha-D-ribose 1-diphosphate + adenine. It functions in the pathway purine metabolism; AMP biosynthesis via salvage pathway; AMP from adenine: step 1/1. In terms of biological role, catalyzes a salvage reaction resulting in the formation of AMP, that is energically less costly than de novo synthesis. This Butyrivibrio fibrisolvens protein is Adenine phosphoribosyltransferase.